The sequence spans 367 residues: Heme A synthase (367 aa).

Transmembrane regions (helical) follow at residues 25–45, 111–131, 139–159, 174–194, 210–230, 272–292, 305–325, and 327–347; these read ALRLWLGFVLLALFCLVLVGG, LIARGIGVIFALPLLYFWLTG, WPLVGILALGALQGFIGWWMV, LATHLVMACLIFAGCMWIMRG, GLAAAIAVFALFQIYLGALVA, FIHRIGAYTLFALVLINMVIA, AVLLFALVTVQAAIGVATLLM, and VPLHWGLLHQAGALVVFGFAV. A heme-binding site is contributed by H274. A heme-binding site is contributed by H335.

Belongs to the COX15/CtaA family. Type 2 subfamily. In terms of assembly, interacts with CtaB. Heme b is required as a cofactor.

The protein localises to the cell membrane. It catalyses the reaction Fe(II)-heme o + 2 A + H2O = Fe(II)-heme a + 2 AH2. Its pathway is porphyrin-containing compound metabolism; heme A biosynthesis; heme A from heme O: step 1/1. Catalyzes the conversion of heme O to heme A by two successive hydroxylations of the methyl group at C8. The first hydroxylation forms heme I, the second hydroxylation results in an unstable dihydroxymethyl group, which spontaneously dehydrates, resulting in the formyl group of heme A. This Rhizobium etli (strain ATCC 51251 / DSM 11541 / JCM 21823 / NBRC 15573 / CFN 42) protein is Heme A synthase.